The following is a 465-amino-acid chain: Kinesin-like protein KIN-1 (465 aa).

Residues N3 to I334 enclose the Kinesin motor domain. Position 87-94 (G87–T94) interacts with ATP. Residues P338–D358 form a disordered region. A compositionally biased stretch (basic and acidic residues) spans S341 to D358. Residues V402–E444 are a coiled coil.

The protein belongs to the TRAFAC class myosin-kinesin ATPase superfamily. Kinesin family. KIN-1 subfamily. In terms of assembly, homodimer. Interacts with WIP1 and WIP2. Specifically expressed in ovules and anthers.

Kinesin-like motor protein that promotes synapsis and is required for proper crossover distribution in meiosis. Plays a role in the nuclear division cycles during megagametogenesis. This is Kinesin-like protein KIN-1 from Arabidopsis thaliana (Mouse-ear cress).